The chain runs to 61 residues: Large ribosomal subunit protein bL32 (61 aa).

The tract at residues 1–22 (MAVPKQKSSKSRGRKRRTHQKV) is disordered. Basic residues predominate over residues 7-20 (KSSKSRGRKRRTHQ).

Belongs to the bacterial ribosomal protein bL32 family.

The polypeptide is Large ribosomal subunit protein bL32 (Desulforapulum autotrophicum (strain ATCC 43914 / DSM 3382 / VKM B-1955 / HRM2) (Desulfobacterium autotrophicum)).